A 387-amino-acid chain; its full sequence is Eukaryotic translation initiation factor 3 subunit M (387 aa).

The region spanning 181-340 is the PCI domain; it reads LSSKVMIELL…RKVHISSTMH (160 aa).

It belongs to the eIF-3 subunit M family. Component of the eukaryotic translation initiation factor 3 (eIF-3) complex. The eIF-3 complex interacts with pix.

The protein resides in the cytoplasm. Its subcellular location is the golgi apparatus. Functionally, component of the eukaryotic translation initiation factor 3 (eIF-3) complex, which is involved in protein synthesis of a specialized repertoire of mRNAs and, together with other initiation factors, stimulates binding of mRNA and methionyl-tRNAi to the 40S ribosome. The eIF-3 complex specifically targets and initiates translation of a subset of mRNAs involved in cell proliferation. The protein is Eukaryotic translation initiation factor 3 subunit M of Drosophila pseudoobscura pseudoobscura (Fruit fly).